We begin with the raw amino-acid sequence, 472 residues long: MNYLPIFIDIKQKPCLVVGGGDIAYRKINFLLKAHGQVTCIAKSSCKNVVKLASDNKIIYFEKSFEASDIKEQVLIVSATDNTSLNKQVSELSNQNNIPVNVVDSPDLCTFIMPSIVDRSPIVIAISSAGKAPVLARLIRAKLESTLPHAYGKLAELAGNFRDKVKEKFSNIEDRRYFWEKTFSGIIAEKVFSGKIQEAKADLQVQLDGSTKTQVGEVYLVGGGPGDPDLLTFKALRLMQQADVVLYDRLVSNGVMGLVRRDAQLIYVGKERDNHVVPQGDINQLLVNLAKQGRRVCRLKGGDPFIFGRGGEEIETLAENGISFQVVPGITAASGCSTYSGIPLTHRDYSQSCRFVTGHLKDGSMNLPWHELSVEQQTIVFYMALNGARHLSEQLITHGMSPDMPVALVEKGTTPEQKVYTTTLKKLPDLVKNEIIHAPTLIIIGEVVTLREKLNWFDAKLASSKKSYLFGG.

Residues 1-203 (MNYLPIFIDI…GKIQEAKADL (203 aa)) form a precorrin-2 dehydrogenase /sirohydrochlorin ferrochelatase region. NAD(+) contacts are provided by residues 22–23 (DI) and 43–44 (KS). Ser128 is subject to Phosphoserine. The tract at residues 216–472 (GEVYLVGGGP…SSKKSYLFGG (257 aa)) is uroporphyrinogen-III C-methyltransferase. Residue Pro225 participates in S-adenosyl-L-methionine binding. Asp248 serves as the catalytic Proton acceptor. Lys270 acts as the Proton donor in catalysis. S-adenosyl-L-methionine is bound by residues 301 to 303 (GGD), Ile306, 331 to 332 (TA), Met383, and Gly412.

This sequence in the N-terminal section; belongs to the precorrin-2 dehydrogenase / sirohydrochlorin ferrochelatase family. In the C-terminal section; belongs to the precorrin methyltransferase family.

It catalyses the reaction uroporphyrinogen III + 2 S-adenosyl-L-methionine = precorrin-2 + 2 S-adenosyl-L-homocysteine + H(+). The catalysed reaction is precorrin-2 + NAD(+) = sirohydrochlorin + NADH + 2 H(+). The enzyme catalyses siroheme + 2 H(+) = sirohydrochlorin + Fe(2+). Its pathway is cofactor biosynthesis; adenosylcobalamin biosynthesis; precorrin-2 from uroporphyrinogen III: step 1/1. It functions in the pathway cofactor biosynthesis; adenosylcobalamin biosynthesis; sirohydrochlorin from precorrin-2: step 1/1. It participates in porphyrin-containing compound metabolism; siroheme biosynthesis; precorrin-2 from uroporphyrinogen III: step 1/1. The protein operates within porphyrin-containing compound metabolism; siroheme biosynthesis; siroheme from sirohydrochlorin: step 1/1. Its pathway is porphyrin-containing compound metabolism; siroheme biosynthesis; sirohydrochlorin from precorrin-2: step 1/1. In terms of biological role, multifunctional enzyme that catalyzes the SAM-dependent methylations of uroporphyrinogen III at position C-2 and C-7 to form precorrin-2 via precorrin-1. Then it catalyzes the NAD-dependent ring dehydrogenation of precorrin-2 to yield sirohydrochlorin. Finally, it catalyzes the ferrochelation of sirohydrochlorin to yield siroheme. This Ruthia magnifica subsp. Calyptogena magnifica protein is Siroheme synthase.